The chain runs to 390 residues: 3-ketoacyl-CoA thiolase (390 aa).

Cys-95 functions as the Acyl-thioester intermediate in the catalytic mechanism. Residues His-346 and Cys-376 each act as proton acceptor in the active site.

The protein belongs to the thiolase-like superfamily. Thiolase family. Heterotetramer of two alpha chains (FadB) and two beta chains (FadA).

Its subcellular location is the cytoplasm. It catalyses the reaction an acyl-CoA + acetyl-CoA = a 3-oxoacyl-CoA + CoA. It functions in the pathway lipid metabolism; fatty acid beta-oxidation. Catalyzes the final step of fatty acid oxidation in which acetyl-CoA is released and the CoA ester of a fatty acid two carbons shorter is formed. The protein is 3-ketoacyl-CoA thiolase of Acinetobacter baylyi (strain ATCC 33305 / BD413 / ADP1).